The following is a 315-amino-acid chain: Deoxyhypusine hydroxylase (315 aa).

6 HEAT-like PBS-type repeats span residues 23–52, 56–82, 89–115, 179–205, 211–237, and 244–270; these read IAKRFRSLFTLRNLNGPLCIDAMASALNDK, LRHEIAYCLGQMEDEYALKVLIDLVKN, VRHEAAEALGAIGSESAHKTLKEYSND, NRYRALFSLRDIGDEQSVLALCDGLKD, LRHEVAFVLGQLQHRVAIDPLTTCVLD, and VRHEAAEALGAIASTETIPLLEKLLQD. Fe cation is bound by residues His-58, His-91, and Glu-92. Residues His-213, His-246, and Glu-247 each contribute to the Fe cation site.

Belongs to the deoxyhypusine hydroxylase family. It depends on Fe(2+) as a cofactor.

It catalyses the reaction [eIF5A protein]-deoxyhypusine + AH2 + O2 = [eIF5A protein]-hypusine + A + H2O. The protein operates within protein modification; eIF5A hypusination. Its function is as follows. Catalyzes the hydroxylation of the N(6)-(4-aminobutyl)-L-lysine intermediate produced by deoxyhypusine synthase/DHPS on a critical lysine of the eukaryotic translation initiation factor 5A/eIF-5A. This is the second step of the post-translational modification of that lysine into an unusual amino acid residue named hypusine. Hypusination is unique to mature eIF-5A factor and is essential for its function. The sequence is that of Deoxyhypusine hydroxylase (dohh-1) from Dictyostelium discoideum (Social amoeba).